A 100-amino-acid chain; its full sequence is UPF0473 protein Csac_1599 (100 aa).

The protein belongs to the UPF0473 family.

The polypeptide is UPF0473 protein Csac_1599 (Caldicellulosiruptor saccharolyticus (strain ATCC 43494 / DSM 8903 / Tp8T 6331)).